We begin with the raw amino-acid sequence, 242 residues long: Spiralin (242 aa).

The signal sequence occupies residues 1–23 (MKKLLSILAVFGVSAVGTTSVVA). Cysteine 24 is lipidated: N-palmitoyl cysteine. Cysteine 24 is lipidated: S-diacylglycerol cysteine.

The protein belongs to the spiralin family. In terms of assembly, seems to occur as dimer, tetramers, and large oligomers of identical chains. Post-translationally, palmitate and stearate are the major lipid components.

Its subcellular location is the cell membrane. Its function is as follows. Major membrane protein of spiroplasma. The sequence is that of Spiralin (spi) from Spiroplasma melliferum.